Reading from the N-terminus, the 1309-residue chain is Target of rapamycin complex 2 subunit ste20 (1309 aa).

Positions 24–110 (DFIKKMNTTD…IESFQGENGE (87 aa)) constitute an REM-1 domain. Residues 105-128 (QGENGEAKTGSTSLTRSASATVSR) are disordered. The span at 113-128 (TGSTSLTRSASATVSR) shows a compositional bias: polar residues. Ser151 carries the phosphoserine modification. The tract at residues 183 to 205 (NVNEKNNSSSEDTQPNGKRPSSL) is disordered. Over residues 194–205 (DTQPNGKRPSSL) the composition is skewed to polar residues. 6 consecutive transmembrane segments (helical) span residues 285 to 305 (LFLD…WILS), 392 to 412 (LIDG…LVYL), 504 to 524 (VIDL…ESFL), 564 to 584 (TAVL…VCMI), 926 to 946 (LNHW…LEVC), and 984 to 1004 (LLLR…INFI). Thr1203 bears the Phosphothreonine mark.

This sequence belongs to the RICTOR family. In terms of assembly, the target of rapamycin complex 2 (TORC2) is composed of at least bit61, pop3/wat1, sin1, ste20 and tor1. Either Ser-203 or Ser-204 are phosphorylated as well.

The protein resides in the membrane. Its function is as follows. Component of TORC2, which regulates multiple cellular processes to control cell growth in response to environmental signals. TORC2 is required for cell survival under various stress conditions. TORC2 positively controls G1 cell-cycle arrest, sexual development and amino acid uptake. Positively regulates amino acid uptake through the control of expression of amino acid permeases. The sequence is that of Target of rapamycin complex 2 subunit ste20 from Schizosaccharomyces pombe (strain 972 / ATCC 24843) (Fission yeast).